A 483-amino-acid chain; its full sequence is Cysteine--tRNA ligase (483 aa).

Position 29 (Cys-29) interacts with Zn(2+). Residues 31–41 (ITVYDYCHLGH) carry the 'HIGH' region motif. Cys-215, His-240, and Glu-244 together coordinate Zn(2+). The 'KMSKS' region motif lies at 272 to 276 (KMSKS). An ATP-binding site is contributed by Lys-275.

The protein belongs to the class-I aminoacyl-tRNA synthetase family. In terms of assembly, monomer. It depends on Zn(2+) as a cofactor.

Its subcellular location is the cytoplasm. It catalyses the reaction tRNA(Cys) + L-cysteine + ATP = L-cysteinyl-tRNA(Cys) + AMP + diphosphate. The protein is Cysteine--tRNA ligase (cysS) of Synechocystis sp. (strain ATCC 27184 / PCC 6803 / Kazusa).